The primary structure comprises 410 residues: Arginine deiminase (410 aa).

C400 (amidino-cysteine intermediate) is an active-site residue.

This sequence belongs to the arginine deiminase family.

The protein localises to the cytoplasm. The catalysed reaction is L-arginine + H2O = L-citrulline + NH4(+). It participates in amino-acid degradation; L-arginine degradation via ADI pathway; carbamoyl phosphate from L-arginine: step 1/2. The sequence is that of Arginine deiminase (arcA) from Borreliella burgdorferi (strain ATCC 35210 / DSM 4680 / CIP 102532 / B31) (Borrelia burgdorferi).